The primary structure comprises 82 residues: Endocuticle structural glycoprotein SgAbd-5 (82 aa).

Q1 carries the pyrrolidone carboxylic acid modification. Residues 18-82 enclose the Chitin-binding type R&amp;R domain; it reads LGQYNFAYRT…ENGYQPRVQS (65 aa).

Component of the soft endocuticle of desert locust. In Schistocerca gregaria (Desert locust), this protein is Endocuticle structural glycoprotein SgAbd-5.